Here is a 587-residue protein sequence, read N- to C-terminus: Protein NRT1/ PTR FAMILY 2.9 (587 aa).

12 consecutive transmembrane segments (helical) span residues 35–55, 65–85, 94–114, 135–155, 181–201, 209–229, 325–345, 368–388, 412–432, 457–477, 493–513, and 540–560; these read FEKL…TTVF, VVNI…FLCD, LSFA…TAVI, IGQI…AGGI, FFNW…TLIV, WSIG…IFFA, CVIR…AYIQ, IPAG…IPIY, VGAG…VEQY, GMWL…AGVG, FAGS…TFLL, and YFYF…LLVS.

It belongs to the major facilitator superfamily. Proton-dependent oligopeptide transporter (POT/PTR) (TC 2.A.17) family. As to expression, expressed in roots, stems and major veins of the leaves. Detected in the companion cells of the root phloem.

It is found in the cell membrane. Low-affinity nitrate transporter facilitating nitrate loading into root phloem. Not involved in dipeptides transport, but has a weak glucosinolate transport activity. The sequence is that of Protein NRT1/ PTR FAMILY 2.9 (NPF2.9) from Arabidopsis thaliana (Mouse-ear cress).